Here is a 249-residue protein sequence, read N- to C-terminus: Triosephosphate isomerase (249 aa).

2 residues coordinate substrate: asparagine 12 and lysine 14. Lysine 14 carries the post-translational modification N6-acetyllysine. Tyrosine 68 is modified (3'-nitrotyrosine). A Phosphoserine modification is found at serine 80. The Electrophile role is filled by histidine 96. At serine 106 the chain carries Phosphoserine. Lysine 142 is covalently cross-linked (Glycyl lysine isopeptide (Lys-Gly) (interchain with G-Cter in SUMO1)). Residue lysine 149 is modified to N6-succinyllysine. Residue lysine 156 is modified to N6-acetyllysine; alternate. The residue at position 156 (lysine 156) is an N6-succinyllysine; alternate. A Phosphoserine modification is found at serine 159. Glutamate 166 acts as the Proton acceptor in catalysis. Threonine 173 is subject to Phosphothreonine. The residue at position 194 (lysine 194) is an N6-acetyllysine; alternate. Residue lysine 194 is modified to N6-succinyllysine; alternate. Lysine 194 is modified (N6-methyllysine; alternate). Position 198 is a phosphoserine (serine 198). Tyrosine 209 bears the 3'-nitrotyrosine mark. A Phosphoserine modification is found at serine 212. The residue at position 214 (threonine 214) is a Phosphothreonine. The residue at position 223 (serine 223) is a Phosphoserine. At lysine 238 the chain carries N6-acetyllysine.

Belongs to the triosephosphate isomerase family. Homodimer.

It is found in the cytoplasm. The enzyme catalyses dihydroxyacetone phosphate = methylglyoxal + phosphate. It catalyses the reaction D-glyceraldehyde 3-phosphate = dihydroxyacetone phosphate. The protein operates within carbohydrate degradation; glycolysis; D-glyceraldehyde 3-phosphate from glycerone phosphate: step 1/1. It participates in carbohydrate biosynthesis; gluconeogenesis. Triosephosphate isomerase is an extremely efficient metabolic enzyme that catalyzes the interconversion between dihydroxyacetone phosphate (DHAP) and D-glyceraldehyde-3-phosphate (G3P) in glycolysis and gluconeogenesis. Functionally, it is also responsible for the non-negligible production of methylglyoxal a reactive cytotoxic side-product that modifies and can alter proteins, DNA and lipids. The sequence is that of Triosephosphate isomerase (TPI1) from Gorilla gorilla gorilla (Western lowland gorilla).